We begin with the raw amino-acid sequence, 126 residues long: UPF0292 protein TSIB_0423 (126 aa).

Residues 20-100 (NGVILVEGMR…RVDTNTRREL (81 aa)) enclose the Toprim domain. 3 residues coordinate Mg(2+): E26, D69, and D71.

This sequence belongs to the UPF0292 family. Mg(2+) is required as a cofactor.

The protein is UPF0292 protein TSIB_0423 of Thermococcus sibiricus (strain DSM 12597 / MM 739).